A 68-amino-acid chain; its full sequence is DNA-directed RNA polymerase subunit Rpo10 (68 aa).

Residues Cys-7, Cys-10, Cys-44, and Cys-45 each contribute to the Zn(2+) site.

It belongs to the archaeal Rpo10/eukaryotic RPB10 RNA polymerase subunit family. As to quaternary structure, part of the RNA polymerase complex. Zn(2+) serves as cofactor.

The protein localises to the cytoplasm. It carries out the reaction RNA(n) + a ribonucleoside 5'-triphosphate = RNA(n+1) + diphosphate. Its function is as follows. DNA-dependent RNA polymerase (RNAP) catalyzes the transcription of DNA into RNA using the four ribonucleoside triphosphates as substrates. The chain is DNA-directed RNA polymerase subunit Rpo10 from Methanococcus maripaludis (strain DSM 14266 / JCM 13030 / NBRC 101832 / S2 / LL).